The following is a 384-amino-acid chain: Acetylornithine aminotransferase (384 aa).

Pyridoxal 5'-phosphate is bound by residues 94–95 (GT) and Phe121. Arg124 provides a ligand contact to N(2)-acetyl-L-ornithine. A pyridoxal 5'-phosphate-binding site is contributed by 206-209 (DEVQ). Lys235 carries the post-translational modification N6-(pyridoxal phosphate)lysine. N(2)-acetyl-L-ornithine is bound at residue Ser263. Residue Thr264 participates in pyridoxal 5'-phosphate binding.

The protein belongs to the class-III pyridoxal-phosphate-dependent aminotransferase family. ArgD subfamily. Homodimer. The cofactor is pyridoxal 5'-phosphate.

It is found in the cytoplasm. The enzyme catalyses N(2)-acetyl-L-ornithine + 2-oxoglutarate = N-acetyl-L-glutamate 5-semialdehyde + L-glutamate. Its pathway is amino-acid biosynthesis; L-arginine biosynthesis; N(2)-acetyl-L-ornithine from L-glutamate: step 4/4. The protein is Acetylornithine aminotransferase of Listeria innocua serovar 6a (strain ATCC BAA-680 / CLIP 11262).